Reading from the N-terminus, the 478-residue chain is ATP synthase subunit beta (478 aa).

158-165 (GGAGVGKT) lines the ATP pocket.

This sequence belongs to the ATPase alpha/beta chains family. In terms of assembly, F-type ATPases have 2 components, CF(1) - the catalytic core - and CF(0) - the membrane proton channel. CF(1) has five subunits: alpha(3), beta(3), gamma(1), delta(1), epsilon(1). CF(0) has three main subunits: a(1), b(2) and c(9-12). The alpha and beta chains form an alternating ring which encloses part of the gamma chain. CF(1) is attached to CF(0) by a central stalk formed by the gamma and epsilon chains, while a peripheral stalk is formed by the delta and b chains.

The protein localises to the cell inner membrane. The enzyme catalyses ATP + H2O + 4 H(+)(in) = ADP + phosphate + 5 H(+)(out). Its function is as follows. Produces ATP from ADP in the presence of a proton gradient across the membrane. The catalytic sites are hosted primarily by the beta subunits. This is ATP synthase subunit beta from Rhizobium leguminosarum bv. trifolii (strain WSM2304).